The chain runs to 502 residues: 4,4'-diapophytoene desaturase (4,4'-diaponeurosporene-forming) (502 aa).

FAD is bound at residue 5–17 (VIGAGVTGLAAAA).

The protein belongs to the carotenoid/retinoid oxidoreductase family. CrtN subfamily.

It catalyses the reaction 15-cis-4,4'-diapophytoene + 3 FAD + 3 H(+) = all-trans-4,4'-diaponeurosporene + 3 FADH2. Its pathway is carotenoid biosynthesis; staphyloxanthin biosynthesis; staphyloxanthin from farnesyl diphosphate: step 2/5. Its function is as follows. Involved in the biosynthesis of the yellow-orange carotenoid staphyloxanthin, which plays a role in the virulence via its protective function against oxidative stress. Catalyzes three successive dehydrogenation reactions that lead to the introduction of three double bonds into 4,4'-diapophytoene (dehydrosqualene), with 4,4'-diapophytofluene and 4,4'-diapo-zeta-carotene as intermediates, and 4,4'-diaponeurosporene (the major deep-yellow pigment in staphylococci strains) as the end product. The sequence is that of 4,4'-diapophytoene desaturase (4,4'-diaponeurosporene-forming) from Staphylococcus aureus (strain COL).